Reading from the N-terminus, the 1234-residue chain is PAN2-PAN3 deadenylation complex catalytic subunit PAN2 (1234 aa).

Residues 12–32 (LKNSNNNSNSNSSSNNSSNGV) are disordered. Residues 14-30 (NSNNNSNSNSSSNNSSN) are compositionally biased toward low complexity. WD repeat units follow at residues 176–213 (NHTG…SIKT), 272–315 (AFPA…VYHA), and 342–381 (QQQP…TLSK). The segment at 323-346 (PLPPAGSSAAQQQKQQQQQQQQPH) is disordered. The segment covering 333–344 (QQQKQQQQQQQQ) has biased composition (low complexity). The tract at residues 383–537 (FVNFPQEIER…DSIFQCQNDE (155 aa)) is linker. Residues 538–946 (KIPNCYSRLQ…KPVIVIYQEV (409 aa)) form the USP domain. The segment at 751–775 (PNTQQDQQQQQQQQQQQQQQQQPTN) is disordered. Over residues 754–772 (QQDQQQQQQQQQQQQQQQQ) the composition is skewed to low complexity. A divalent metal cation is bound by residues Asp1004, Glu1006, Asp1138, and Asp1191. An Exonuclease domain is found at 1072–1199 (GEAFIDDYIV…EDARTALLLY (128 aa)).

This sequence belongs to the peptidase C19 family. PAN2 subfamily. In terms of assembly, forms a heterotrimer with an asymmetric homodimer of the regulatory subunit PAN3 to form the poly(A)-nuclease (PAN) deadenylation complex. A divalent metal cation is required as a cofactor.

Its subcellular location is the cytoplasm. It catalyses the reaction Exonucleolytic cleavage of poly(A) to 5'-AMP.. Positively regulated by the regulatory subunit PAN3. Functionally, catalytic subunit of the poly(A)-nuclease (PAN) deadenylation complex, one of two cytoplasmic mRNA deadenylases involved in mRNA turnover. PAN specifically shortens poly(A) tails of RNA and the activity is stimulated by poly(A)-binding protein PAB1. PAN deadenylation is followed by rapid degradation of the shortened mRNA tails by the CCR4-NOT complex. Deadenylated mRNAs are then degraded by two alternative mechanisms, namely exosome-mediated 3'-5' exonucleolytic degradation, or deadenylation-dependent mRNA decaping and subsequent 5'-3' exonucleolytic degradation by XRN1. May also be involved in post-transcriptional maturation of mRNA poly(A) tails. In Lodderomyces elongisporus (strain ATCC 11503 / CBS 2605 / JCM 1781 / NBRC 1676 / NRRL YB-4239) (Yeast), this protein is PAN2-PAN3 deadenylation complex catalytic subunit PAN2.